An 81-amino-acid polypeptide reads, in one-letter code: MTDVFSQAQHQLDALGLRCPEPVMMVRKTVRKMADGETLLIIADDPATTRDIPSFCEFMDHTLIASDTSKTPYQYLLKKGR.

Cysteine 19 serves as the catalytic Cysteine persulfide intermediate.

The protein belongs to the sulfur carrier protein TusA family.

It localises to the cytoplasm. Functionally, sulfur carrier protein which probably makes part of a sulfur-relay system. The sequence is that of Sulfur carrier protein TusA from Shewanella denitrificans (strain OS217 / ATCC BAA-1090 / DSM 15013).